The sequence spans 202 residues: LexA repressor (202 aa).

Positions 28 to 48 (QQEIARAFGFRSLGTVRNYLV) form a DNA-binding region, H-T-H motif. Active-site for autocatalytic cleavage activity residues include Ser-120 and Lys-157.

It belongs to the peptidase S24 family. Homodimer.

It carries out the reaction Hydrolysis of Ala-|-Gly bond in repressor LexA.. In terms of biological role, represses a number of genes involved in the response to DNA damage (SOS response), including recA and lexA. In the presence of single-stranded DNA, RecA interacts with LexA causing an autocatalytic cleavage which disrupts the DNA-binding part of LexA, leading to derepression of the SOS regulon and eventually DNA repair. The polypeptide is LexA repressor (Syntrophotalea carbinolica (strain DSM 2380 / NBRC 103641 / GraBd1) (Pelobacter carbinolicus)).